Consider the following 123-residue polypeptide: Protein Wnt-3b (123 aa).

A lipid anchor (O-palmitoleoyl serine; by PORCN) is attached at Ser1. Cys89 and Cys104 form a disulfide bridge. Asn90 is a glycosylation site (N-linked (GlcNAc...) asparagine).

The protein belongs to the Wnt family. In terms of processing, palmitoleoylation is required for efficient binding to frizzled receptors. Depalmitoleoylation leads to Wnt signaling pathway inhibition.

Its subcellular location is the secreted. It localises to the extracellular space. It is found in the extracellular matrix. Ligand for members of the frizzled family of seven transmembrane receptors. Probable developmental protein. May be a signaling molecule which affects the development of discrete regions of tissues. Is likely to signal over only few cell diameters. The protein is Protein Wnt-3b (WNT3B) of Meleagris gallopavo (Wild turkey).